The following is a 257-amino-acid chain: Hydroxyacylglutathione hydrolase (257 aa).

Residues histidine 54, histidine 56, aspartate 58, histidine 59, histidine 113, aspartate 137, and histidine 175 each coordinate Zn(2+).

The protein belongs to the metallo-beta-lactamase superfamily. Glyoxalase II family. Monomer. Requires Zn(2+) as cofactor.

The enzyme catalyses an S-(2-hydroxyacyl)glutathione + H2O = a 2-hydroxy carboxylate + glutathione + H(+). It functions in the pathway secondary metabolite metabolism; methylglyoxal degradation; (R)-lactate from methylglyoxal: step 2/2. In terms of biological role, thiolesterase that catalyzes the hydrolysis of S-D-lactoyl-glutathione to form glutathione and D-lactic acid. The protein is Hydroxyacylglutathione hydrolase of Trichodesmium erythraeum (strain IMS101).